A 405-amino-acid chain; its full sequence is Teichoic acid D-alanyltransferase (405 aa).

The Extracellular segment spans residues 1–9; it reads MLNLQPYEN. Residues 10 to 29 traverse the membrane as a helical segment; that stretch reads PQYFVYLIIALLPVIIGMFK. Topologically, residues 30–33 are cytoplasmic; sequence GFRM. A helical transmembrane segment spans residues 34–49; that stretch reads HWYESIFSLVFLVLIF. At 50-53 the chain is on the extracellular side; sequence DADK. Residues 54-80 traverse the membrane as a helical segment; that stretch reads WPQGKALLGYVVFNLLLVYAYFKYRTR. Topologically, residues 81 to 86 are cytoplasmic; sequence EGSKNS. The chain crosses the membrane as a helical span at residues 87 to 111; that stretch reads TAVFYLSVALGIAHVAVVKFTPLFQ. The Extracellular portion of the chain corresponds to 112-121; that stretch reads HHGSILGFLG. Residues 122-138 form a helical membrane-spanning segment; it reads ISYLTFRVVGTIMEIRD. The Cytoplasmic portion of the chain corresponds to 139-145; it reads GSIKDLN. The stretch at 146-175 is an intramembrane region; the sequence is MWKFIQFLLFFPTISSGPIDRYRRFVKDYD. Over 176–179 the chain is Cytoplasmic; that stretch reads RVPD. A helical membrane pass occupies residues 180-223; the sequence is PEHYAQLVTKAIHYLMLGFLYKFILGYIFGTLWLPSVEHMAMAS. Topologically, residues 224 to 232 are extracellular; the sequence is RGGAFLGLS. The chain crosses the membrane as a helical span at residues 233 to 264; the sequence is WPVVGVMYAYSGYLFFDFAGYSLFAVAISYLM. The Cytoplasmic portion of the chain corresponds to 265 to 274; that stretch reads GIETPMNFNK. Residues 275-310 lie within the membrane without spanning it; it reads PWSHITSRLLNRWQLSLSFWFRDYIYMRFVFFMMKH. Over 311–315 the chain is Cytoplasmic; the sequence is KWIKS. A helical transmembrane segment spans residues 316–335; sequence RVWTAFVGYLVLFLIMGIWH. His335 is an active-site residue. The Extracellular segment spans residues 336–338; the sequence is GET. Residues 339 to 372 form a helical membrane-spanning segment; the sequence is WYYIVYGLFHAMLINLTDAWLRFKKKHKDFFPHN. At 373–378 the chain is on the cytoplasmic side; sequence RATHYP. A helical transmembrane segment spans residues 379-399; sequence SPFSMTANAVCFSFLIFSGFL. Residues 400 to 405 lie on the Extracellular side of the membrane; sequence DKLWFH.

The protein belongs to the membrane-bound acyltransferase family.

The protein localises to the cell membrane. It functions in the pathway cell wall biogenesis; lipoteichoic acid biosynthesis. O-acyltransferase that catalyzes D-alanylation of both teichoic acid and lipoteichoic acid (LTA). D-alanylation of LTA plays an important role in modulating the properties of the cell wall in Gram-positive bacteria, influencing the net charge of the cell wall. Catalyzes D-alanylation from DltC carrier protein. In Lacticaseibacillus rhamnosus (Lactobacillus rhamnosus), this protein is Teichoic acid D-alanyltransferase.